The primary structure comprises 217 residues: Uracil-DNA glycosylase (217 aa).

Catalysis depends on aspartate 62, which acts as the Proton acceptor.

The protein belongs to the uracil-DNA glycosylase (UDG) superfamily. UNG family.

It is found in the cytoplasm. The enzyme catalyses Hydrolyzes single-stranded DNA or mismatched double-stranded DNA and polynucleotides, releasing free uracil.. In terms of biological role, excises uracil residues from the DNA which can arise as a result of misincorporation of dUMP residues by DNA polymerase or due to deamination of cytosine. This chain is Uracil-DNA glycosylase, found in Streptococcus suis (strain 98HAH33).